We begin with the raw amino-acid sequence, 446 residues long: Alkylglycerol monooxygenase (446 aa).

2 helical membrane-spanning segments follow: residues 39–59 and 103–123; these read VNQATPYFIGLILLEIVLGWL and FHFLELPWDSAWTWWLAFLGV. Residues 117–248 form the Fatty acid hydroxylase domain; sequence WLAFLGVDMG…LIIWDRMFGT (132 aa). The short motif at 131-135 is the Histidine box-1 element; it reads HRFAH. Residues 144–148 carry the Histidine box-2 motif; that stretch reads HQVHH. Residues 167-187 form a helical membrane-spanning segment; that stretch reads FSSWIFYSPLALLIPPSVFAV. The short motif at 220–224 is the Histidine box-3 element; the sequence is HRVHH. The next 3 membrane-spanning stretches (helical) occupy residues 329–349, 362–382, and 410–430; these read AWSPVMQAYVILQFFLLLDVY, LTVILLTAYVLLSLTSLGFLI, and PLLPALAFPMEAFILISTIYW.

This sequence belongs to the sterol desaturase family. TMEM195 subfamily. Fe cation is required as a cofactor.

Its subcellular location is the endoplasmic reticulum membrane. It carries out the reaction 1-O-(1,2-saturated-alkyl)-sn-glycerol + (6R)-L-erythro-5,6,7,8-tetrahydrobiopterin + O2 = a 1-(1-hydroxyalkyl)-sn-glycerol + (6R)-L-erythro-6,7-dihydrobiopterin + H2O. Functionally, glyceryl-ether monooxygenase that cleaves the O-alkyl bond of ether lipids. Ether lipids are essential components of brain membranes. The chain is Alkylglycerol monooxygenase (agmo) from Danio rerio (Zebrafish).